The sequence spans 327 residues: Flotillin-like protein FloA (327 aa).

A helical membrane pass occupies residues 2-22; the sequence is IGLIIIVVIVLVALLLLFSFV. A disordered region spans residues 305 to 327; the sequence is ADTGMRNSINQRTNQKDDESPDK. Residues 318–327 show a composition bias toward basic and acidic residues; it reads NQKDDESPDK.

Belongs to the flotillin-like FloA family. In terms of assembly, homooligomerizes.

It localises to the cell membrane. Its subcellular location is the membrane raft. Functionally, found in functional membrane microdomains (FMM) that may be equivalent to eukaryotic membrane rafts. FMMs are highly dynamic and increase in number as cells age. Flotillins are thought to be important factors in membrane fluidity. The sequence is that of Flotillin-like protein FloA from Staphylococcus saprophyticus subsp. saprophyticus (strain ATCC 15305 / DSM 20229 / NCIMB 8711 / NCTC 7292 / S-41).